The sequence spans 336 residues: Holliday junction branch migration complex subunit RuvB (336 aa).

The segment at 1-175 (MEKYSFESVQ…FGMSFRLQFY (175 aa)) is large ATPase domain (RuvB-L). Residues L14, R15, G56, K59, T60, T61, 122-124 (EDF), R165, Y175, and R212 each bind ATP. Mg(2+) is bound at residue T60. Residues 176–253 (EPKELSAIVI…CVRYALNELG (78 aa)) form a small ATPAse domain (RuvB-S) region. Residues 256–336 (ELGFDELDLR…IPFLEQKGLF (81 aa)) are head domain (RuvB-H). DNA contacts are provided by R310 and R315.

It belongs to the RuvB family. In terms of assembly, homohexamer. Forms an RuvA(8)-RuvB(12)-Holliday junction (HJ) complex. HJ DNA is sandwiched between 2 RuvA tetramers; dsDNA enters through RuvA and exits via RuvB. An RuvB hexamer assembles on each DNA strand where it exits the tetramer. Each RuvB hexamer is contacted by two RuvA subunits (via domain III) on 2 adjacent RuvB subunits; this complex drives branch migration. In the full resolvosome a probable DNA-RuvA(4)-RuvB(12)-RuvC(2) complex forms which resolves the HJ.

It is found in the cytoplasm. It carries out the reaction ATP + H2O = ADP + phosphate + H(+). In terms of biological role, the RuvA-RuvB-RuvC complex processes Holliday junction (HJ) DNA during genetic recombination and DNA repair, while the RuvA-RuvB complex plays an important role in the rescue of blocked DNA replication forks via replication fork reversal (RFR). RuvA specifically binds to HJ cruciform DNA, conferring on it an open structure. The RuvB hexamer acts as an ATP-dependent pump, pulling dsDNA into and through the RuvAB complex. RuvB forms 2 homohexamers on either side of HJ DNA bound by 1 or 2 RuvA tetramers; 4 subunits per hexamer contact DNA at a time. Coordinated motions by a converter formed by DNA-disengaged RuvB subunits stimulates ATP hydrolysis and nucleotide exchange. Immobilization of the converter enables RuvB to convert the ATP-contained energy into a lever motion, pulling 2 nucleotides of DNA out of the RuvA tetramer per ATP hydrolyzed, thus driving DNA branch migration. The RuvB motors rotate together with the DNA substrate, which together with the progressing nucleotide cycle form the mechanistic basis for DNA recombination by continuous HJ branch migration. Branch migration allows RuvC to scan DNA until it finds its consensus sequence, where it cleaves and resolves cruciform DNA. The protein is Holliday junction branch migration complex subunit RuvB of Helicobacter hepaticus (strain ATCC 51449 / 3B1).